Here is an 818-residue protein sequence, read N- to C-terminus: uncharacterized protein (818 aa).

3 stretches are compositionally biased toward low complexity: residues 1–33 (MYNN…NYIS), 44–68 (NNFL…PQQQ), and 97–150 (NNSN…TKSN). 5 disordered regions span residues 1 to 68 (MYNN…PQQQ), 92 to 150 (LNTG…TKSN), 164 to 220 (KLDN…KYHE), 284 to 306 (NMNG…NNSD), and 415 to 445 (NINK…NNNN). 2 stretches are compositionally biased toward acidic residues: residues 172 to 190 (SEEE…EEKE) and 205 to 214 (DNNSQDEDKE). Residues 284–302 (NMNGSSDSSDSSNSSGHSR) show a composition bias toward low complexity. A helical membrane pass occupies residues 534–554 (IIAIIVIVWPLIANLTYKFIV). The segment at 779–808 (ANNFMSDSNRSPSSSSSSSSSTSDSENGML) is disordered. Positions 784 to 803 (SDSNRSPSSSSSSSSSTSDS) are enriched in low complexity.

It is found in the membrane. This is an uncharacterized protein from Dictyostelium discoideum (Social amoeba).